The sequence spans 358 residues: Heme A synthase (358 aa).

The next 8 helical transmembrane spans lie at 25 to 45 (LVRYWLYAVFAVLIAIVMVGG), 111 to 131 (LLARFVGFLVAVPLGFFWLTG), 141 to 161 (MLGLLALGGLQGAIGWWMVAS), 176 to 196 (IHLTTACVIITAVFYIARGLV), 210 to 230 (FAGWIVFAVLVQIYLGGLVAG), 269 to 289 (VQFVHRMFAYTVLLLAILHAV), 304 to 324 (TIVLVGLVFIQAMIGIATLLM), and 326 to 346 (APLHLGLTHQFFALVVLAFAV). His-273 lines the heme pocket. His-334 is a binding site for heme.

Belongs to the COX15/CtaA family. Type 2 subfamily. As to quaternary structure, interacts with CtaB. The cofactor is heme b.

The protein resides in the cell membrane. It catalyses the reaction Fe(II)-heme o + 2 A + H2O = Fe(II)-heme a + 2 AH2. It participates in porphyrin-containing compound metabolism; heme A biosynthesis; heme A from heme O: step 1/1. In terms of biological role, catalyzes the conversion of heme O to heme A by two successive hydroxylations of the methyl group at C8. The first hydroxylation forms heme I, the second hydroxylation results in an unstable dihydroxymethyl group, which spontaneously dehydrates, resulting in the formyl group of heme A. This chain is Heme A synthase, found in Brucella abortus (strain S19).